Here is a 427-residue protein sequence, read N- to C-terminus: 3-phosphoshikimate 1-carboxyvinyltransferase (427 aa).

Residues Lys-20, Ser-21, and Arg-25 each contribute to the 3-phosphoshikimate site. Lys-20 contributes to the phosphoenolpyruvate binding site. Residues Gly-92 and Arg-120 each coordinate phosphoenolpyruvate. Positions 166, 168, 312, and 339 each coordinate 3-phosphoshikimate. Position 168 (Gln-168) interacts with phosphoenolpyruvate. Asp-312 serves as the catalytic Proton acceptor. 2 residues coordinate phosphoenolpyruvate: Arg-343 and Arg-385.

Belongs to the EPSP synthase family. As to quaternary structure, monomer.

Its subcellular location is the cytoplasm. The enzyme catalyses 3-phosphoshikimate + phosphoenolpyruvate = 5-O-(1-carboxyvinyl)-3-phosphoshikimate + phosphate. The protein operates within metabolic intermediate biosynthesis; chorismate biosynthesis; chorismate from D-erythrose 4-phosphate and phosphoenolpyruvate: step 6/7. Its function is as follows. Catalyzes the transfer of the enolpyruvyl moiety of phosphoenolpyruvate (PEP) to the 5-hydroxyl of shikimate-3-phosphate (S3P) to produce enolpyruvyl shikimate-3-phosphate and inorganic phosphate. The polypeptide is 3-phosphoshikimate 1-carboxyvinyltransferase (Streptococcus pneumoniae serotype 2 (strain D39 / NCTC 7466)).